Reading from the N-terminus, the 202-residue chain is Arenicin-2 (202 aa).

The signal sequence occupies residues 1–25 (MTSTQSVAVYATLILAIFCFNDIHC). The propeptide occupies 26–181 (DPIAEARAAA…SGDNNEPEKR (156 aa)). Positions 73–168 (GDGVEGSVMV…ACQGKSVYWL (96 aa)) constitute a BRICHOS domain. Intrachain disulfides connect Cys-100–Cys-160 and Cys-184–Cys-201.

Its function is as follows. Has antimicrobial activity against the Gram-negative bacteria E.coli and P.mirabilis, the Gram-positive bacterium L.monocytogenes and the yeast C.albicans. The chain is Arenicin-2 from Arenicola marina (Lugworm).